The primary structure comprises 90 residues: Molybdopterin synthase sulfur carrier subunit (90 aa).

Gly90 carries the post-translational modification 1-thioglycine; alternate. Residue Gly90 is modified to Glycyl adenylate; alternate.

It belongs to the MoaD family. MOCS2A subfamily. Heterotetramer; composed of 2 small (Mocs2A) and 2 large (Mocs2B) subunits. C-terminal thiocarboxylation occurs in 2 steps, it is first acyl-adenylated (-COAMP) via the hesA/moeB/thiF part of MOCS3, then thiocarboxylated (-COSH) via the rhodanese domain of MOCS3.

It is found in the cytoplasm. It functions in the pathway cofactor biosynthesis; molybdopterin biosynthesis. In terms of biological role, acts as a sulfur carrier required for molybdopterin biosynthesis. Component of the molybdopterin synthase complex that catalyzes the conversion of precursor Z into molybdopterin by mediating the incorporation of 2 sulfur atoms into precursor Z to generate a dithiolene group. In the complex, serves as sulfur donor by being thiocarboxylated (-COSH) at its C-terminus by MOCS3. After interaction with Mocs2B, the sulfur is then transferred to precursor Z to form molybdopterin. This is Molybdopterin synthase sulfur carrier subunit from Drosophila erecta (Fruit fly).